The sequence spans 251 residues: tRNA (guanine-N(1)-)-methyltransferase (251 aa).

S-adenosyl-L-methionine is bound by residues G117 and 137–142; that span reads IGDYVL.

This sequence belongs to the RNA methyltransferase TrmD family. Homodimer.

It localises to the cytoplasm. It carries out the reaction guanosine(37) in tRNA + S-adenosyl-L-methionine = N(1)-methylguanosine(37) in tRNA + S-adenosyl-L-homocysteine + H(+). Functionally, specifically methylates guanosine-37 in various tRNAs. The chain is tRNA (guanine-N(1)-)-methyltransferase from Actinobacillus pleuropneumoniae serotype 5b (strain L20).